A 705-amino-acid chain; its full sequence is MTIKTADIQFNADGTPIATNFDDVYFSSFDGAAETEYVFLHNNLLPQRWQQWSKPTFVIAETGFGTGLNLLVTLAVFKQHLAQHPASTFTLHYISTEKFPLTHTDLVQALNAFVQFEDDAKALIAQYPMPLDGCHRMSFLNNRVIVDLWLGDIHDSLPQWHTNENGLVDAWYLDGFAPSKNPQMWSPQLFEQMARLASNGCTFATFTAAGFVKRGLRDAGFEVEKRKGHGRKREMLAGIIARELETKVNRQQARYYQRGAYMNSTSVNTRCAENHAQTALASKPKVAIIGAGIAGASMAYAMAKKGYDCDIYFNDATPAQGASGNPQAGFYPQLNVDASHASQINAHSFVYAANQYRQLQSQGFHFAHQWCGVLQLGFKPALAERYAKLTESQLWPGELVRYVKPSEAAQLANCEMPYSGLFMPLGGWIDPAQLVDALFDAAAKLSQVRLYSHHALNGIEQKNVSITAQENTRWQLHFEASEATSGMNKNTSLAQADIVIYATGAQSHDIAALADFPLRMVRGQVEAVPTQTALSKLNTVLCHKGYLTPEYNGQHALGSTYVKNDLSTDYRLSEQDKNLATHYQSLSDCQWAQEVVGNAQGRAAVRCSSPDHLPLVGALADIEKQKKELSDLYKALPLSYYPKGSNMNNVFVLTGLGSRGLTTAPLMAEVLASQISGQPLPMANDLLNTLNPNRFLIRQLIRREV.

The tRNA (mnm(5)s(2)U34)-methyltransferase stretch occupies residues 1–241; it reads MTIKTADIQF…KREMLAGIIA (241 aa). Residues 289 to 705 form an FAD-dependent cmnm(5)s(2)U34 oxidoreductase region; the sequence is IGAGIAGASM…LIRQLIRREV (417 aa).

The protein in the N-terminal section; belongs to the methyltransferase superfamily. tRNA (mnm(5)s(2)U34)-methyltransferase family. In the C-terminal section; belongs to the DAO family. It depends on FAD as a cofactor.

Its subcellular location is the cytoplasm. The catalysed reaction is 5-aminomethyl-2-thiouridine(34) in tRNA + S-adenosyl-L-methionine = 5-methylaminomethyl-2-thiouridine(34) in tRNA + S-adenosyl-L-homocysteine + H(+). Functionally, catalyzes the last two steps in the biosynthesis of 5-methylaminomethyl-2-thiouridine (mnm(5)s(2)U) at the wobble position (U34) in tRNA. Catalyzes the FAD-dependent demodification of cmnm(5)s(2)U34 to nm(5)s(2)U34, followed by the transfer of a methyl group from S-adenosyl-L-methionine to nm(5)s(2)U34, to form mnm(5)s(2)U34. In Pseudoalteromonas atlantica (strain T6c / ATCC BAA-1087), this protein is tRNA 5-methylaminomethyl-2-thiouridine biosynthesis bifunctional protein MnmC.